A 157-amino-acid polypeptide reads, in one-letter code: Isotocin-neurophysin IT 1 (157 aa).

A signal peptide spans 1–20; that stretch reads MFGTSVSALCLLFLLSVCTA. A disulfide bridge connects residues C21 and C26. G29 carries the post-translational modification Glycine amide. 7 disulfides stabilise this stretch: C42–C86, C45–C59, C53–C76, C60–C66, C93–C106, C100–C118, and C107–C112.

Belongs to the vasopressin/oxytocin family. Post-translationally, seven disulfide bonds are present in neurophysin.

Its subcellular location is the secreted. Isotocin causes contraction of smooth muscles. This Oncorhynchus keta (Chum salmon) protein is Isotocin-neurophysin IT 1.